Here is a 441-residue protein sequence, read N- to C-terminus: Glutamate--tRNA ligase 2 (441 aa).

A 'HIGH' region motif is present at residues 8–18 (PSPTGYIHVGN). The short motif at 239–243 (ALSKR) is the 'KMSKS' region element. Residue Lys-242 coordinates ATP.

It belongs to the class-I aminoacyl-tRNA synthetase family. Glutamate--tRNA ligase type 1 subfamily. In terms of assembly, monomer.

The protein resides in the cytoplasm. The catalysed reaction is tRNA(Glu) + L-glutamate + ATP = L-glutamyl-tRNA(Glu) + AMP + diphosphate. In terms of biological role, catalyzes the attachment of glutamate to tRNA(Glu) in a two-step reaction: glutamate is first activated by ATP to form Glu-AMP and then transferred to the acceptor end of tRNA(Glu). The polypeptide is Glutamate--tRNA ligase 2 (Ruegeria sp. (strain TM1040) (Silicibacter sp.)).